Reading from the N-terminus, the 473-residue chain is Photosystem II CP43 reaction center protein (473 aa).

Residues M1–E14 constitute a propeptide that is removed on maturation. T15 carries the post-translational modification N-acetylthreonine. Residue T15 is modified to Phosphothreonine. 5 consecutive transmembrane segments (helical) span residues L69–A93, L134–N155, K178–T200, K255–S275, and W291–A312. Residue E367 coordinates [CaMn4O5] cluster. Residues R447–P471 form a helical membrane-spanning segment.

It belongs to the PsbB/PsbC family. PsbC subfamily. As to quaternary structure, PSII is composed of 1 copy each of membrane proteins PsbA, PsbB, PsbC, PsbD, PsbE, PsbF, PsbH, PsbI, PsbJ, PsbK, PsbL, PsbM, PsbT, PsbX, PsbY, PsbZ, Psb30/Ycf12, at least 3 peripheral proteins of the oxygen-evolving complex and a large number of cofactors. It forms dimeric complexes. Binds multiple chlorophylls and provides some of the ligands for the Ca-4Mn-5O cluster of the oxygen-evolving complex. It may also provide a ligand for a Cl- that is required for oxygen evolution. PSII binds additional chlorophylls, carotenoids and specific lipids. serves as cofactor.

It localises to the plastid. Its subcellular location is the chloroplast thylakoid membrane. In terms of biological role, one of the components of the core complex of photosystem II (PSII). It binds chlorophyll and helps catalyze the primary light-induced photochemical processes of PSII. PSII is a light-driven water:plastoquinone oxidoreductase, using light energy to abstract electrons from H(2)O, generating O(2) and a proton gradient subsequently used for ATP formation. The polypeptide is Photosystem II CP43 reaction center protein (Pinus koraiensis (Korean pine)).